Here is a 177-residue protein sequence, read N- to C-terminus: Calcium-binding protein CML38 (177 aa).

Over residues 1 to 11 (MKNNTQPQSSF) the composition is skewed to polar residues. Positions 1 to 44 (MKNNTQPQSSFKKLCRKLSPKREDSAGEIQQHNSSNGEDKNREL) are disordered. 4 consecutive EF-hand domains span residues 39–74 (DKNR…LGEQ), 75–110 (LSDE…DDEE), 111–146 (EKKM…LGES), and 147–177 (RTTD…LMMR). Ca(2+) contacts are provided by Asp-52, Asn-54, Asp-56, Arg-58, Glu-63, Asp-88, Asp-90, Asp-92, Met-94, and Glu-99. Residues Asp-160, Asn-162, Asp-164, and Glu-171 each contribute to the Ca(2+) site.

As to quaternary structure, binds to ABCG36. In terms of tissue distribution, expressed in cotyledons and guard cells of young leaves. In mature root, expressed in the epidermis, trichoblasts, young lateral root and root tip. Expressed from stage 9 to 15 of flower development in anther wall.

In terms of biological role, potential calcium sensor that binds calcium in vitro. The sequence is that of Calcium-binding protein CML38 from Arabidopsis thaliana (Mouse-ear cress).